A 318-amino-acid chain; its full sequence is Protoheme IX farnesyltransferase (318 aa).

Helical transmembrane passes span 34–54, 55–75, 95–115, 118–138, 155–175, 182–202, 228–250, 254–273, and 287–307; these read VMSL…GQIN, PVIG…SGAL, IPAG…LSAF, IILG…TIFF, IVIG…CVTG, IVLF…LALF, IVVY…FASL, AFAT…VLRM, and FAFS…DYMI.

Belongs to the UbiA prenyltransferase family. Protoheme IX farnesyltransferase subfamily.

It localises to the cell inner membrane. It catalyses the reaction heme b + (2E,6E)-farnesyl diphosphate + H2O = Fe(II)-heme o + diphosphate. It participates in porphyrin-containing compound metabolism; heme O biosynthesis; heme O from protoheme: step 1/1. In terms of biological role, converts heme B (protoheme IX) to heme O by substitution of the vinyl group on carbon 2 of heme B porphyrin ring with a hydroxyethyl farnesyl side group. This chain is Protoheme IX farnesyltransferase, found in Sinorhizobium fredii (strain NBRC 101917 / NGR234).